We begin with the raw amino-acid sequence, 299 residues long: Putative activator of 90 kDa heat shock protein ATPase homolog 2 (299 aa).

The protein belongs to the AHA1 family.

In terms of biological role, co-chaperone that stimulates HSP90 ATPase activity. The chain is Putative activator of 90 kDa heat shock protein ATPase homolog 2 from Homo sapiens (Human).